Here is a 69-residue protein sequence, read N- to C-terminus: MTESRQTRLQVKCPTCQTAVVWKPENAFRPFCSQRCKLIDLGGWADGKYTVSGQTESLPEISEPDMAYR.

Zn(2+) contacts are provided by Cys-13, Cys-16, Cys-32, and Cys-36.

The protein belongs to the DNA gyrase inhibitor YacG family. As to quaternary structure, interacts with GyrB. Zn(2+) is required as a cofactor.

Inhibits all the catalytic activities of DNA gyrase by preventing its interaction with DNA. Acts by binding directly to the C-terminal domain of GyrB, which probably disrupts DNA binding by the gyrase. This Neisseria meningitidis serogroup B (strain ATCC BAA-335 / MC58) protein is DNA gyrase inhibitor YacG.